A 159-amino-acid chain; its full sequence is Putative ribosomal RNA large subunit methyltransferase H (159 aa).

S-adenosyl-L-methionine-binding positions include Leu-76, Gly-108, and 127–132 (LSAMTF).

The protein belongs to the RNA methyltransferase RlmH family.

Its subcellular location is the cytoplasm. It carries out the reaction pseudouridine(1915) in 23S rRNA + S-adenosyl-L-methionine = N(3)-methylpseudouridine(1915) in 23S rRNA + S-adenosyl-L-homocysteine + H(+). Specifically methylates the pseudouridine at position 1915 (m3Psi1915) in 23S rRNA. In Methanospirillum hungatei JF-1 (strain ATCC 27890 / DSM 864 / NBRC 100397 / JF-1), this protein is Putative ribosomal RNA large subunit methyltransferase H.